The sequence spans 241 residues: MAERSFYDLSIHYVPDGKNTAEELISMAKHLGFAGIGLSNHSTAEGPLKSDGTEGFDIFRTVELVASNPSKLHGLVGKYRNKVDVLAVHGGDEGINRAAVENSNVDILIHPFTPKGSGLNHVLAKSASENNVAIAFDIDSLIMSRGGRRVHSLSHFRDYLALSRKYDVPMLLTSNALSIFGLRAPREIIALAALFGMEKDEAIMALSETPLKIVQKKRHDKNYVCEGVEIFEPSPSVLGDE.

This sequence belongs to the eukaryotic/archaeal RNase P protein component 3 family. In terms of assembly, consists of a catalytic RNA component and at least 4-5 protein subunits.

The protein resides in the cytoplasm. It catalyses the reaction Endonucleolytic cleavage of RNA, removing 5'-extranucleotides from tRNA precursor.. Its function is as follows. Part of ribonuclease P, a protein complex that generates mature tRNA molecules by cleaving their 5'-ends. The protein is Ribonuclease P protein component 3 of Methanococcoides burtonii (strain DSM 6242 / NBRC 107633 / OCM 468 / ACE-M).